Here is a 168-residue protein sequence, read N- to C-terminus: MEERSDSEPTPGCSGPGPAPVRDGGGAHTWAPEDAWMGTHPKYLEMMELDIGDATQVYIAFLVYLDLMESKSWHEVNCVGIPELQLICLLGTEIEGEGLQTVVPTPISASLSHNRIREILKASRKLQGDPELPMSFTLAIVESDSTIVYYKLTDGFMLPDPQNISLRR.

Positions 1 to 32 are disordered; sequence MEERSDSEPTPGCSGPGPAPVRDGGGAHTWAP. Ser-7 and Ser-165 each carry phosphoserine.

It belongs to the SEN15 family. In terms of assembly, homodimer. tRNA splicing endonuclease is a heterotetramer composed of TSEN2, TSEN15, TSEN34/LENG5 and TSEN54. tRNA splicing endonuclease complex also contains proteins of the pre-mRNA 3' end processing machinery such as CLP1, CPSF1, CPSF4 and CSTF2.

It is found in the nucleus. Its subcellular location is the nucleolus. Functionally, non-catalytic subunit of the tRNA-splicing endonuclease complex, a complex responsible for identification and cleavage of the splice sites in pre-tRNA. It cleaves pre-tRNA at the 5' and 3' splice sites to release the intron. The products are an intron and two tRNA half-molecules bearing 2',3' cyclic phosphate and 5'-OH termini. There are no conserved sequences at the splice sites, but the intron is invariably located at the same site in the gene, placing the splice sites an invariant distance from the constant structural features of the tRNA body. The tRNA splicing endonuclease is also involved in mRNA processing via its association with pre-mRNA 3'-end processing factors, establishing a link between pre-tRNA splicing and pre-mRNA 3'-end formation, suggesting that the endonuclease subunits function in multiple RNA-processing events. This Mus musculus (Mouse) protein is tRNA-splicing endonuclease subunit Sen15 (Tsen15).